The chain runs to 219 residues: MSENQIKGILGTKLGMTQVFDEDNRVVPVTVVEAGPCVVTQIRTEEKDGYSAIQIAYGDIDPRKVNKPQSGHFAKAGVTPRRYVTEIRMDDVLSDYEVGQDVTVELFGDVKFVDVTGTTRGHGFAGAMKRHGFAGQGAAHGNQAAHRRVGGIGACATPGRVFKGTRMAGRMGNNRVTTQNLKLFKVDADSNLLLIKGAVPGIRGGLVTVKTAVKGGAHA.

This sequence belongs to the universal ribosomal protein uL3 family. In terms of assembly, part of the 50S ribosomal subunit. Forms a cluster with proteins L14 and L19.

Functionally, one of the primary rRNA binding proteins, it binds directly near the 3'-end of the 23S rRNA, where it nucleates assembly of the 50S subunit. This is Large ribosomal subunit protein uL3 from Corynebacterium kroppenstedtii (strain DSM 44385 / JCM 11950 / CIP 105744 / CCUG 35717).